An 81-amino-acid chain; its full sequence is Saposin-C (81 aa).

The region spanning 1–81 (ESVTCKACEY…CSELGLCMSG (81 aa)) is the Saposin B-type domain. Intrachain disulfides connect Cys5/Cys78, Cys8/Cys72, and Cys36/Cys47. N-linked (GlcNAc...) asparagine glycosylation is present at Asn22.

Functionally, saposin-A and saposin-C stimulate the hydrolysis of glucosylceramide by beta-glucosylceramidase (EC 3.2.1.45) and galactosylceramide by beta-galactosylceramidase (EC 3.2.1.46). Saposin-C apparently acts by combining with the enzyme and acidic lipid to form an activated complex, rather than by solubilizing the substrate. The polypeptide is Saposin-C (PSAP) (Cavia porcellus (Guinea pig)).